A 239-amino-acid chain; its full sequence is Methylthioribulose-1-phosphate dehydratase (239 aa).

C94 is a substrate binding site. 2 residues coordinate Zn(2+): H112 and H114. E136 functions as the Proton donor/acceptor in the catalytic mechanism. H192 lines the Zn(2+) pocket.

The protein belongs to the aldolase class II family. MtnB subfamily. It depends on Zn(2+) as a cofactor.

The protein resides in the cytoplasm. The enzyme catalyses 5-(methylsulfanyl)-D-ribulose 1-phosphate = 5-methylsulfanyl-2,3-dioxopentyl phosphate + H2O. It participates in amino-acid biosynthesis; L-methionine biosynthesis via salvage pathway; L-methionine from S-methyl-5-thio-alpha-D-ribose 1-phosphate: step 2/6. In terms of biological role, catalyzes the dehydration of methylthioribulose-1-phosphate (MTRu-1-P) into 2,3-diketo-5-methylthiopentyl-1-phosphate (DK-MTP-1-P). Functions in the methionine salvage pathway. May play a role in apoptosis. This Aquarana catesbeiana (American bullfrog) protein is Methylthioribulose-1-phosphate dehydratase.